We begin with the raw amino-acid sequence, 192 residues long: uncharacterized protein (192 aa).

The segment at 17–73 (MLRGSGKKPIQRLAKAPAATASSKTSEWRATTAYGFLPAGGDVRPHSPRYESQGVLS) is disordered. Low complexity predominate over residues 30 to 41 (AKAPAATASSKT).

This is an uncharacterized protein from Sinorhizobium fredii (strain NBRC 101917 / NGR234).